A 502-amino-acid polypeptide reads, in one-letter code: Probable cytosol aminopeptidase (502 aa).

Mn(2+)-binding residues include Lys-258 and Asp-263. Lys-270 is a catalytic residue. The Mn(2+) site is built by Asp-281, Asp-340, and Glu-342. Residue Arg-344 is part of the active site.

Belongs to the peptidase M17 family. It depends on Mn(2+) as a cofactor.

The protein localises to the cytoplasm. It catalyses the reaction Release of an N-terminal amino acid, Xaa-|-Yaa-, in which Xaa is preferably Leu, but may be other amino acids including Pro although not Arg or Lys, and Yaa may be Pro. Amino acid amides and methyl esters are also readily hydrolyzed, but rates on arylamides are exceedingly low.. It carries out the reaction Release of an N-terminal amino acid, preferentially leucine, but not glutamic or aspartic acids.. Its function is as follows. Presumably involved in the processing and regular turnover of intracellular proteins. Catalyzes the removal of unsubstituted N-terminal amino acids from various peptides. This is Probable cytosol aminopeptidase from Clavibacter michiganensis subsp. michiganensis (strain NCPPB 382).